Consider the following 151-residue polypeptide: Internal scaffolding protein VP3 (151 aa).

Residues 120-151 (VETPQQAPQSTTNQTTTKPAPASGEPTPVPTP) are disordered. Residues 122–137 (TPQQAPQSTTNQTTTK) show a composition bias toward polar residues.

It belongs to the microvidae B protein family.

The protein localises to the host cytoplasm. In terms of biological role, participates in the assembly of the viral procapsid in the cytoplasm. Internal scaffolding protein VP3 is released from the procapsid upon genome packaging, possibly through affinity displacement by the protein VP8, or by proteolysis. The polypeptide is Internal scaffolding protein VP3 (Bdellovibrio bacteriovorus (Bacteriophage phiMH2K)).